Consider the following 55-residue polypeptide: Large ribosomal subunit protein bL33 (55 aa).

This sequence belongs to the bacterial ribosomal protein bL33 family. As to quaternary structure, part of the 50S ribosomal subunit. Contacts protein L35.

In terms of biological role, binds the 23S rRNA and the E site tRNA. This chain is Large ribosomal subunit protein bL33 (rpmG), found in Deinococcus radiodurans (strain ATCC 13939 / DSM 20539 / JCM 16871 / CCUG 27074 / LMG 4051 / NBRC 15346 / NCIMB 9279 / VKM B-1422 / R1).